Consider the following 293-residue polypeptide: Triosephosphate isomerase (293 aa).

Position 25-27 (Asn25–Lys27) interacts with substrate. The active-site Electrophile is the His117. Glu218 (proton acceptor) is an active-site residue.

The protein belongs to the triosephosphate isomerase family. In terms of assembly, homodimer.

Its subcellular location is the cytoplasm. It carries out the reaction D-glyceraldehyde 3-phosphate = dihydroxyacetone phosphate. It participates in carbohydrate biosynthesis; gluconeogenesis. Its pathway is carbohydrate degradation; glycolysis; D-glyceraldehyde 3-phosphate from glycerone phosphate: step 1/1. Its function is as follows. Involved in the gluconeogenesis. Catalyzes stereospecifically the conversion of dihydroxyacetone phosphate (DHAP) to D-glyceraldehyde-3-phosphate (G3P). The protein is Triosephosphate isomerase of Tropheryma whipplei (strain Twist) (Whipple's bacillus).